Here is a 234-residue protein sequence, read N- to C-terminus: MPSGCHSSPPSGLRGDMASLVPLSPYLSPTVLLLVSCDLGFVRADRPPSPVNVTVTHLRANSATVSWDVPEGNIVIGYSISQQRQNGPGQRVIREVNTTTRACALWGLAEDSDYTVQVRSIGLRGESPPGPRVHFRTLKGSDRLPSNSSSPGDITVEGLDGERPLQTGEVVIIVVVLLMWAAVIGLFCRQYDIIKDNDSNNNPKEKGKGPEQSPQGRPVGTRQKKSPSINTIDV.

A signal peptide spans 1–44; the sequence is MPSGCHSSPPSGLRGDMASLVPLSPYLSPTVLLLVSCDLGFVRA. The Extracellular segment spans residues 45–167; sequence DRPPSPVNVT…GLDGERPLQT (123 aa). The 94-residue stretch at 47–140 folds into the Fibronectin type-III domain; sequence PPSPVNVTVT…PRVHFRTLKG (94 aa). Asn-52, Asn-97, and Asn-147 each carry an N-linked (GlcNAc...) asparagine glycan. The segment at 122–160 is disordered; that stretch reads GLRGESPPGPRVHFRTLKGSDRLPSNSSSPGDITVEGLD. A helical membrane pass occupies residues 168 to 188; sequence GEVVIIVVVLLMWAAVIGLFC. The Cytoplasmic segment spans residues 189 to 234; it reads RQYDIIKDNDSNNNPKEKGKGPEQSPQGRPVGTRQKKSPSINTIDV. Residues 197 to 209 show a composition bias toward basic and acidic residues; it reads NDSNNNPKEKGKG. Residues 197 to 234 are disordered; it reads NDSNNNPKEKGKGPEQSPQGRPVGTRQKKSPSINTIDV.

In terms of tissue distribution, highly expressed in the liver and the brain, including in the cortex, hypothalamus and hippocampus. Also expressed in adipose tissue.

It localises to the membrane. The protein resides in the secreted. Its function is as follows. Has anti-inflammatory properties. In the colon, acts on macrophages to down-regulate inflammation. May suppress osteoclastogenesis and mature osteoclast resorptive function. In white adipose tissue, decreases local inflammation, via interaction with GPR116. Also required for proper systemic glucose tolerance, specifically sensitizing white adipocytes to insulin and promoting glucose uptake. The insulin sensitizing function in adipose tissue is mediated by interaction with ADGRF5/GPR116 and activation of cAMP signaling. The sequence is that of Fibronectin type III domain-containing protein 4 (FNDC4) from Homo sapiens (Human).